The primary structure comprises 244 residues: 5-oxoprolinase subunit A (244 aa).

The protein belongs to the LamB/PxpA family. In terms of assembly, forms a complex composed of PxpA, PxpB and PxpC.

It catalyses the reaction 5-oxo-L-proline + ATP + 2 H2O = L-glutamate + ADP + phosphate + H(+). In terms of biological role, catalyzes the cleavage of 5-oxoproline to form L-glutamate coupled to the hydrolysis of ATP to ADP and inorganic phosphate. The protein is 5-oxoprolinase subunit A of Shigella flexneri serotype 5b (strain 8401).